A 197-amino-acid polypeptide reads, in one-letter code: Small ribosomal subunit protein uS2 (197 aa).

Belongs to the universal ribosomal protein uS2 family.

This is Small ribosomal subunit protein uS2 (rps2) from Archaeoglobus fulgidus (strain ATCC 49558 / DSM 4304 / JCM 9628 / NBRC 100126 / VC-16).